Consider the following 440-residue polypeptide: Protein eva-1 homolog C (440 aa).

Residues 1-13 (MLLPGHPRPPPAP) show a composition bias toward pro residues. Positions 1–23 (MLLPGHPRPPPAPQSAQNQGLRR) are disordered. Residues 1 to 48 (MLLPGHPRPPPAPQSAQNQGLRRQVEPPGQLLRLFYCTVLVCSKETSA) form the signal peptide. Residues 49–321 (LTDFSGYLTK…AYIRAHPERA (273 aa)) lie on the Extracellular side of the membrane. N-linked (GlcNAc...) asparagine glycans are attached at residues Asn-62, Asn-109, and Asn-165. Residues 67–159 (ACDGDYLNLQ…KYLLVSFKCQ (93 aa)) form the SUEL-type lectin 1 domain. Positions 168–260 (VCENQELKLH…KYLTVAYACV (93 aa)) constitute an SUEL-type lectin 2 domain. A helical transmembrane segment spans residues 322-342 (ALLFMSSVCIGLLLTLCALVI). At 343–440 (RVSCTKDFRE…SLPRNVGHFY (98 aa)) the chain is on the cytoplasmic side. The disordered stretch occupies residues 364–384 (SDKAEEDSEEDLEEEDSSDSQ). Over residues 367 to 381 (AEEDSEEDLEEEDSS) the composition is skewed to acidic residues.

It belongs to the EVA1 family. Ubiquitous.

The protein resides in the cell membrane. Functionally, binds heparin. This Mus musculus (Mouse) protein is Protein eva-1 homolog C (Eva1c).